The primary structure comprises 340 residues: MKFVDMTNITVIAGNGGNGCVSFQKSGRRASFLKKPNGSNGGNGGDVWLLADPNINTLNYFHSNCVFRAGHGQSGRSRGCTGKRGKDVIVKVPWGTRVSYKKTNKLLGDMGIHHKRLMVAKGGRHGLGNGHFKSSLHYCKVLNTNGSTGEFQHLLLELLLIANVGIFGLPNSGKSSFIRIISSAKPKVADYPFTTLVPYLGVVQINNYDRFIIADIPGIIKGASHGLGLGMRFLKHLEHCQILLHFIDIAPVDNSDPLENIITIQHELSNYNENLVRKPCWLIFNKIDLLEQQVAEKRINHVISSLKWKGRYYSISSIHNTNVLSLCNSIMKFIMHHTHS.

An Obg domain is found at 1–161 (MKFVDMTNIT…QHLLLELLLI (161 aa)). Residues 162–335 (ANVGIFGLPN…LCNSIMKFIM (174 aa)) enclose the OBG-type G domain. Residues 168 to 175 (GLPNSGKS), 193 to 197 (FTTLV), 215 to 218 (DIPG), 285 to 288 (NKID), and 316 to 318 (SSI) each bind GTP. Mg(2+) is bound by residues Ser-175 and Thr-195.

This sequence belongs to the TRAFAC class OBG-HflX-like GTPase superfamily. OBG GTPase family. As to quaternary structure, monomer. Mg(2+) serves as cofactor.

It localises to the cytoplasm. Functionally, an essential GTPase which binds GTP, GDP and possibly (p)ppGpp with moderate affinity, with high nucleotide exchange rates and a fairly low GTP hydrolysis rate. Plays a role in control of the cell cycle, stress response, ribosome biogenesis and in those bacteria that undergo differentiation, in morphogenesis control. This Blochmanniella pennsylvanica (strain BPEN) protein is GTPase Obg.